The chain runs to 1570 residues: Mediator of RNA polymerase II transcription subunit 1 (1570 aa).

Short sequence motifs (LXXLL motif) lie at residues 585 to 589 and 626 to 630; these read LTSLL and LMNLL. 3 disordered regions span residues 592-687, 771-880, and 922-1561; these read TNNT…TEDD, SKLS…FKDF, and SKTL…MDDD. Residues 675-687 are compositionally biased toward basic and acidic residues; that stretch reads TGAEKMKNQTEDD. Composition is skewed to polar residues over residues 788–801, 832–861, and 931–942; these read RDSS…STLF, GSPN…QSGF, and QETQSRSQSPLL. The segment covering 946 to 958 has biased composition (basic and acidic residues); that stretch reads LGKDRPQKQKVKE. Residues 961-970 show a composition bias toward gly residues; that stretch reads NGGGAGGGLS. 5 stretches are compositionally biased toward low complexity: residues 1022–1035, 1066–1082, 1089–1113, 1121–1140, and 1152–1161; these read PTST…GTSG, SSHG…SSSS, SSLS…MKIG, SGQS…SMGK, and SSNVSNSSGS. Polar residues predominate over residues 1173 to 1190; that stretch reads MNPSLSKPNISPSHSRPS. The span at 1217 to 1228 shows a compositional bias: gly residues; the sequence is GSGGQHLSGGGS. Over residues 1229-1271 the composition is skewed to low complexity; that stretch reads NSTTKSSSGLVSSGSLSQKPNSSSSSSSSSSSSSSSSSSSSSS. A compositionally biased stretch (polar residues) spans 1276–1287; the sequence is VSQNLHGNSKGK. Gly residues predominate over residues 1308-1328; it reads VGTGGPGSEDPMDGGGGGGST. Residues 1347-1359 are compositionally biased toward basic and acidic residues; sequence PTKREKSEKDKSK. Composition is skewed to polar residues over residues 1418 to 1433 and 1441 to 1455; these read SQMQ…SGST and PSHN…QALD. Positions 1459–1469 are enriched in low complexity; the sequence is ESGSSSIAEKS. A compositionally biased stretch (basic residues) spans 1494–1503; sequence KHKKHKKEKK. A compositionally biased stretch (basic and acidic residues) spans 1504-1516; that stretch reads RLKDKDRDREKKK. A compositionally biased stretch (low complexity) spans 1536 to 1546; it reads MAMSGGSMMSS.

Belongs to the Mediator complex subunit 1 family. As to quaternary structure, component of the Mediator complex.

It localises to the nucleus. Functionally, component of the Mediator complex, a coactivator involved in the regulated transcription of nearly all RNA polymerase II-dependent genes. Mediator functions as a bridge to convey information from gene-specific regulatory proteins to the basal RNA polymerase II transcription machinery. Mediator is recruited to promoters by direct interactions with regulatory proteins and serves as a scaffold for the assembly of a functional preinitiation complex with RNA polymerase II and the general transcription factors. This is Mediator of RNA polymerase II transcription subunit 1 (med1) from Xenopus laevis (African clawed frog).